Here is a 204-residue protein sequence, read N- to C-terminus: Recombination protein RecR (204 aa).

Residues 63–78 (CRICFNVADSELCPIC) form a C4-type zinc finger. The Toprim domain maps to 86-181 (NKICVVEQPQ…KVTRLARGLP (96 aa)).

Belongs to the RecR family.

In terms of biological role, may play a role in DNA repair. It seems to be involved in an RecBC-independent recombinational process of DNA repair. It may act with RecF and RecO. The polypeptide is Recombination protein RecR (Dehalococcoides mccartyi (strain ATCC BAA-2266 / KCTC 15142 / 195) (Dehalococcoides ethenogenes (strain 195))).